A 28-amino-acid polypeptide reads, in one-letter code: Cruzioseptin-4 (28 aa).

E25 is modified (glutamic acid 1-amide). The propeptide occupies 27-28 (EH).

In terms of tissue distribution, expressed by the skin glands.

The protein localises to the secreted. In terms of biological role, has antimicrobial activity. In Cruziohyla calcarifer (Splendid leaf frog), this protein is Cruzioseptin-4.